The following is a 134-amino-acid chain: Profilin-3 (134 aa).

A disulfide bridge connects residues cysteine 13 and cysteine 118. An Involved in PIP2 interaction motif is present at residues 84–100 (AVIRGKKGSGGITIKKT). Phosphothreonine is present on threonine 114.

It belongs to the profilin family. Occurs in many kinds of cells as a complex with monomeric actin in a 1:1 ratio. Post-translationally, phosphorylated by MAP kinases.

Its subcellular location is the cytoplasm. The protein resides in the cytoskeleton. In terms of biological role, binds to actin and affects the structure of the cytoskeleton. At high concentrations, profilin prevents the polymerization of actin, whereas it enhances it at low concentrations. The polypeptide is Profilin-3 (Olea europaea (Common olive)).